The following is a 228-amino-acid chain: UPF0502 protein Rfer_1648 (228 aa).

It belongs to the UPF0502 family.

The protein is UPF0502 protein Rfer_1648 of Albidiferax ferrireducens (strain ATCC BAA-621 / DSM 15236 / T118) (Rhodoferax ferrireducens).